The sequence spans 450 residues: Glucose-6-phosphate isomerase (450 aa).

Catalysis depends on Glu290, which acts as the Proton donor. Catalysis depends on residues His311 and Lys425.

Belongs to the GPI family.

It is found in the cytoplasm. It carries out the reaction alpha-D-glucose 6-phosphate = beta-D-fructose 6-phosphate. Its pathway is carbohydrate biosynthesis; gluconeogenesis. It functions in the pathway carbohydrate degradation; glycolysis; D-glyceraldehyde 3-phosphate and glycerone phosphate from D-glucose: step 2/4. Catalyzes the reversible isomerization of glucose-6-phosphate to fructose-6-phosphate. The sequence is that of Glucose-6-phosphate isomerase from Limosilactobacillus fermentum (Lactobacillus fermentum).